We begin with the raw amino-acid sequence, 99 residues long: uncharacterized protein (99 aa).

This is an uncharacterized protein from Micromonospora olivasterospora.